The sequence spans 336 residues: Holliday junction branch migration complex subunit RuvB (336 aa).

The tract at residues 4 to 184 (SDRLISSQSI…FGIVQRLEYY (181 aa)) is large ATPase domain (RuvB-L). Residues I23, R24, G65, K68, T69, T70, 131-133 (EDY), R174, Y184, and R221 contribute to the ATP site. T69 serves as a coordination point for Mg(2+). The tract at residues 185–255 (SVDSLTKIVA…MAQQALEMLE (71 aa)) is small ATPAse domain (RuvB-S). A head domain (RuvB-H) region spans residues 258–336 (QHGFDLMDRK…HFGFSAIEQE (79 aa)). DNA-binding residues include R313 and R318.

This sequence belongs to the RuvB family. As to quaternary structure, homohexamer. Forms an RuvA(8)-RuvB(12)-Holliday junction (HJ) complex. HJ DNA is sandwiched between 2 RuvA tetramers; dsDNA enters through RuvA and exits via RuvB. An RuvB hexamer assembles on each DNA strand where it exits the tetramer. Each RuvB hexamer is contacted by two RuvA subunits (via domain III) on 2 adjacent RuvB subunits; this complex drives branch migration. In the full resolvosome a probable DNA-RuvA(4)-RuvB(12)-RuvC(2) complex forms which resolves the HJ.

Its subcellular location is the cytoplasm. It carries out the reaction ATP + H2O = ADP + phosphate + H(+). Its function is as follows. The RuvA-RuvB-RuvC complex processes Holliday junction (HJ) DNA during genetic recombination and DNA repair, while the RuvA-RuvB complex plays an important role in the rescue of blocked DNA replication forks via replication fork reversal (RFR). RuvA specifically binds to HJ cruciform DNA, conferring on it an open structure. The RuvB hexamer acts as an ATP-dependent pump, pulling dsDNA into and through the RuvAB complex. RuvB forms 2 homohexamers on either side of HJ DNA bound by 1 or 2 RuvA tetramers; 4 subunits per hexamer contact DNA at a time. Coordinated motions by a converter formed by DNA-disengaged RuvB subunits stimulates ATP hydrolysis and nucleotide exchange. Immobilization of the converter enables RuvB to convert the ATP-contained energy into a lever motion, pulling 2 nucleotides of DNA out of the RuvA tetramer per ATP hydrolyzed, thus driving DNA branch migration. The RuvB motors rotate together with the DNA substrate, which together with the progressing nucleotide cycle form the mechanistic basis for DNA recombination by continuous HJ branch migration. Branch migration allows RuvC to scan DNA until it finds its consensus sequence, where it cleaves and resolves cruciform DNA. In Legionella pneumophila (strain Paris), this protein is Holliday junction branch migration complex subunit RuvB.